A 503-amino-acid chain; its full sequence is Maturase K (503 aa).

It belongs to the intron maturase 2 family. MatK subfamily.

The protein resides in the plastid. It is found in the chloroplast. Functionally, usually encoded in the trnK tRNA gene intron. Probably assists in splicing its own and other chloroplast group II introns. In Psilotum nudum (Whisk fern), this protein is Maturase K.